Reading from the N-terminus, the 267-residue chain is Hydroxyethylthiazole kinase (267 aa).

Met51 contacts substrate. Residues Arg127 and Ser173 each coordinate ATP. Ala200 contributes to the substrate binding site.

It belongs to the Thz kinase family. The cofactor is Mg(2+).

It catalyses the reaction 5-(2-hydroxyethyl)-4-methylthiazole + ATP = 4-methyl-5-(2-phosphooxyethyl)-thiazole + ADP + H(+). Its pathway is cofactor biosynthesis; thiamine diphosphate biosynthesis; 4-methyl-5-(2-phosphoethyl)-thiazole from 5-(2-hydroxyethyl)-4-methylthiazole: step 1/1. Functionally, catalyzes the phosphorylation of the hydroxyl group of 4-methyl-5-beta-hydroxyethylthiazole (THZ). The polypeptide is Hydroxyethylthiazole kinase (Psychromonas ingrahamii (strain DSM 17664 / CCUG 51855 / 37)).